A 344-amino-acid polypeptide reads, in one-letter code: Arginine N-succinyltransferase (344 aa).

Leu-125 serves as a coordination point for succinyl-CoA. The Proton donor role is filled by His-229.

Belongs to the arginine N-succinyltransferase family.

The catalysed reaction is succinyl-CoA + L-arginine = N(2)-succinyl-L-arginine + CoA + H(+). The protein operates within amino-acid degradation; L-arginine degradation via AST pathway; L-glutamate and succinate from L-arginine: step 1/5. Catalyzes the transfer of succinyl-CoA to arginine to produce N(2)-succinylarginine. This is Arginine N-succinyltransferase from Salmonella agona (strain SL483).